The chain runs to 67 residues: MAVTGQVKWFNNEKGFGFIEVPGENDVFVHFSAIETDGFKSLEEGQKVSFEIEEGNRGPQAKNVIKL.

The CSD domain occupies 5–64 (GQVKWFNNEKGFGFIEVPGENDVFVHFSAIETDGFKSLEEGQKVSFEIEEGNRGPQAKNV).

In terms of assembly, homodimer.

It is found in the cytoplasm. Its function is as follows. Can bind to ATTGG and CCAAT motifs (Y-box motifs) of single-stranded oligonucleotides. The polypeptide is Major cold shock protein CspA (cspA) (Bacillus anthracis).